The chain runs to 119 residues: Putative F420H(2)-dependent quinone reductase Rv3178 (119 aa).

Residues 21–23, 27–32, 43–46, and 54–58 each bind coenzyme F420-(gamma-Glu)n; these read RKS, FVAPLL, VASA, and QWYRN.

Belongs to the F420H(2)-dependent quinone reductase family.

Its subcellular location is the cell membrane. It carries out the reaction oxidized coenzyme F420-(gamma-L-Glu)(n) + a quinol + H(+) = reduced coenzyme F420-(gamma-L-Glu)(n) + a quinone. Involved in a F420-dependent anti-oxidant mechanism that protects M.tuberculosis against oxidative stress and bactericidal agents. Catalyzes the F420H(2)-dependent two-electron reduction of quinones to dihydroquinones, thereby preventing the formation of cytotoxic semiquinones obtained by the one-electron reduction pathway. Since menaquinone is the sole quinone electron carrier in the respiratory chain in M.tuberculosis, the physiological electron acceptor for Fqr-mediated F420H(2) oxidation is therefore likely to be the endogenous menaquinone found in the membrane fraction of M.tuberculosis. The sequence is that of Putative F420H(2)-dependent quinone reductase Rv3178 from Mycobacterium tuberculosis (strain ATCC 25618 / H37Rv).